We begin with the raw amino-acid sequence, 189 residues long: dCTP deaminase (189 aa).

Residues 112–117 (KSTYAR), 136–138 (TLE), glutamine 157, tyrosine 171, and glutamine 181 each bind dCTP. Residue glutamate 138 is the Proton donor/acceptor of the active site.

This sequence belongs to the dCTP deaminase family. As to quaternary structure, homotrimer.

The enzyme catalyses dCTP + H2O + H(+) = dUTP + NH4(+). The protein operates within pyrimidine metabolism; dUMP biosynthesis; dUMP from dCTP (dUTP route): step 1/2. Functionally, catalyzes the deamination of dCTP to dUTP. The protein is dCTP deaminase of Acinetobacter baylyi (strain ATCC 33305 / BD413 / ADP1).